A 342-amino-acid polypeptide reads, in one-letter code: Palmitoyltransferase PFA4 (342 aa).

The Cytoplasmic segment spans residues 1–8; sequence MITFSNPW. Residues 9 to 29 form a helical membrane-spanning segment; the sequence is IGVIIPCIIIFTLSTFSAIYI. Residues 30 to 38 lie on the Lumenal side of the membrane; sequence LPHHVSNNE. A helical transmembrane segment spans residues 39–59; that stretch reads LTLFICASAMVWISYIIAIIV. The Cytoplasmic portion of the chain corresponds to 60–124; the sequence is PPGSPPKNYT…GHRNMPHFMR (65 aa). The 51-residue stretch at 77–127 folds into the DHHC domain; it reads MYCLKCKAYKPERTHHSKALGVCVLKMDHHCPWTNNTVGHRNMPHFMRFLV. Catalysis depends on C107, which acts as the S-palmitoyl cysteine intermediate. The chain crosses the membrane as a helical span at residues 125–145; sequence FLVWVDMTVGYLFIRLCIRIM. The Lumenal segment spans residues 146–162; sequence KLWRDKHLPSYLFDKTE. Residues 163–183 traverse the membrane as a helical segment; the sequence is VILSIVFLPASFFVLFTVGIL. Topologically, residues 184-342 are cytoplasmic; that stretch reads TIRVFVNMCN…ADFGVEHTDI (159 aa).

Belongs to the DHHC palmitoyltransferase family. PFA4 subfamily.

Its subcellular location is the endoplasmic reticulum membrane. It carries out the reaction L-cysteinyl-[protein] + hexadecanoyl-CoA = S-hexadecanoyl-L-cysteinyl-[protein] + CoA. Its function is as follows. Mediates the reversible addition of palmitate to target proteins, thereby regulating their membrane association and biological function. The protein is Palmitoyltransferase PFA4 of Yarrowia lipolytica (strain CLIB 122 / E 150) (Yeast).